A 649-amino-acid chain; its full sequence is UvrABC system protein C (649 aa).

The 80-residue stretch at 12–91 (SSPGVYLMKS…IKQHRPKYNI (80 aa)) folds into the GIY-YIG domain. The 36-residue stretch at 201-236 (NEVARLYRSKMNLASEQMRYEDAARYRDLLRAIEVT) folds into the UVR domain. A disordered region spans residues 603–649 (RLHGGPLPNPPPPGEGAMGDGSIPSPRNGVMDDSIPSPSGRGWPKAG).

Belongs to the UvrC family. As to quaternary structure, interacts with UvrB in an incision complex.

It localises to the cytoplasm. Functionally, the UvrABC repair system catalyzes the recognition and processing of DNA lesions. UvrC both incises the 5' and 3' sides of the lesion. The N-terminal half is responsible for the 3' incision and the C-terminal half is responsible for the 5' incision. The polypeptide is UvrABC system protein C (Geobacter sp. (strain M21)).